A 132-amino-acid polypeptide reads, in one-letter code: Homeobox protein HD-4 (132 aa).

Positions 29–88 form a DNA-binding region, homeobox; that stretch reads GLSGYRYKTHIQVYVLTKIFEITQYPSHDTRQNLAILLNMSPRTIQIWFQNSRSVSRGAA. The disordered stretch occupies residues 82-101; sequence SVSRGAAKKKVSKDNGPQEA.

Its subcellular location is the nucleus. The protein is Homeobox protein HD-4 (HD-4) of Encephalitozoon cuniculi (strain GB-M1) (Microsporidian parasite).